The primary structure comprises 91 residues: Acylphosphatase (91 aa).

Positions 6 to 91 (CMRCYISGRV…WEDYISFDVL (86 aa)) constitute an Acylphosphatase-like domain. Catalysis depends on residues arginine 21 and asparagine 39.

Belongs to the acylphosphatase family.

The enzyme catalyses an acyl phosphate + H2O = a carboxylate + phosphate + H(+). The sequence is that of Acylphosphatase (acyP) from Legionella pneumophila (strain Corby).